We begin with the raw amino-acid sequence, 96 residues long: Aspartyl/glutamyl-tRNA(Asn/Gln) amidotransferase subunit C (96 aa).

Belongs to the GatC family. As to quaternary structure, heterotrimer of A, B and C subunits.

The enzyme catalyses L-glutamyl-tRNA(Gln) + L-glutamine + ATP + H2O = L-glutaminyl-tRNA(Gln) + L-glutamate + ADP + phosphate + H(+). The catalysed reaction is L-aspartyl-tRNA(Asn) + L-glutamine + ATP + H2O = L-asparaginyl-tRNA(Asn) + L-glutamate + ADP + phosphate + 2 H(+). Allows the formation of correctly charged Asn-tRNA(Asn) or Gln-tRNA(Gln) through the transamidation of misacylated Asp-tRNA(Asn) or Glu-tRNA(Gln) in organisms which lack either or both of asparaginyl-tRNA or glutaminyl-tRNA synthetases. The reaction takes place in the presence of glutamine and ATP through an activated phospho-Asp-tRNA(Asn) or phospho-Glu-tRNA(Gln). This is Aspartyl/glutamyl-tRNA(Asn/Gln) amidotransferase subunit C from Bacillus cytotoxicus (strain DSM 22905 / CIP 110041 / 391-98 / NVH 391-98).